A 332-amino-acid polypeptide reads, in one-letter code: Biotin synthase (332 aa).

Positions 53–282 constitute a Radical SAM core domain; sequence YFGKKVKLNM…TKEIRISGGR (230 aa). [4Fe-4S] cluster is bound by residues Cys71, Cys75, and Cys78. Residues Cys115, Cys147, Cys207, and Arg277 each coordinate [2Fe-2S] cluster.

The protein belongs to the radical SAM superfamily. Biotin synthase family. Homodimer. [4Fe-4S] cluster serves as cofactor. The cofactor is [2Fe-2S] cluster.

The enzyme catalyses (4R,5S)-dethiobiotin + (sulfur carrier)-SH + 2 reduced [2Fe-2S]-[ferredoxin] + 2 S-adenosyl-L-methionine = (sulfur carrier)-H + biotin + 2 5'-deoxyadenosine + 2 L-methionine + 2 oxidized [2Fe-2S]-[ferredoxin]. It functions in the pathway cofactor biosynthesis; biotin biosynthesis; biotin from 7,8-diaminononanoate: step 2/2. Catalyzes the conversion of dethiobiotin (DTB) to biotin by the insertion of a sulfur atom into dethiobiotin via a radical-based mechanism. The protein is Biotin synthase of Bacillus anthracis.